We begin with the raw amino-acid sequence, 187 residues long: Orotate phosphoribosyltransferase (187 aa).

5-phospho-alpha-D-ribose 1-diphosphate contacts are provided by residues Arg98, Lys99, Lys102, His104, and 128–136; that span reads EDVTTTGGS. Orotate is bound by residues Thr132 and Arg160.

It belongs to the purine/pyrimidine phosphoribosyltransferase family. PyrE subfamily. In terms of assembly, homodimer. It depends on Mg(2+) as a cofactor.

The catalysed reaction is orotidine 5'-phosphate + diphosphate = orotate + 5-phospho-alpha-D-ribose 1-diphosphate. Its pathway is pyrimidine metabolism; UMP biosynthesis via de novo pathway; UMP from orotate: step 1/2. Its function is as follows. Catalyzes the transfer of a ribosyl phosphate group from 5-phosphoribose 1-diphosphate to orotate, leading to the formation of orotidine monophosphate (OMP). In Bradyrhizobium diazoefficiens (strain JCM 10833 / BCRC 13528 / IAM 13628 / NBRC 14792 / USDA 110), this protein is Orotate phosphoribosyltransferase.